Reading from the N-terminus, the 250-residue chain is NH(3)-dependent NAD(+) synthetase (250 aa).

An ATP-binding site is contributed by 31–38; it reads GISGGIDS. D37 is a Mg(2+) binding site. Residue R122 participates in deamido-NAD(+) binding. ATP is bound at residue T142. E147 is a binding site for Mg(2+). K155 and D162 together coordinate deamido-NAD(+). ATP contacts are provided by K171 and S193. Residue 239–240 coordinates deamido-NAD(+); it reads HK.

This sequence belongs to the NAD synthetase family. In terms of assembly, homodimer.

The enzyme catalyses deamido-NAD(+) + NH4(+) + ATP = AMP + diphosphate + NAD(+) + H(+). It participates in cofactor biosynthesis; NAD(+) biosynthesis; NAD(+) from deamido-NAD(+) (ammonia route): step 1/1. In terms of biological role, catalyzes the ATP-dependent amidation of deamido-NAD to form NAD. Uses ammonia as a nitrogen source. This chain is NH(3)-dependent NAD(+) synthetase, found in Alkaliphilus oremlandii (strain OhILAs) (Clostridium oremlandii (strain OhILAs)).